The chain runs to 256 residues: Small ribosomal subunit protein uS2 (256 aa).

Residues 229–256 (PVDDNGDYGDFDEAIDEYADETDASESE) are disordered. Positions 232-256 (DNGDYGDFDEAIDEYADETDASESE) are enriched in acidic residues.

Belongs to the universal ribosomal protein uS2 family.

This chain is Small ribosomal subunit protein uS2, found in Picosynechococcus sp. (strain ATCC 27264 / PCC 7002 / PR-6) (Agmenellum quadruplicatum).